The sequence spans 127 residues: MLKEFKEFIARGNVMDLAVGVIVGAAFTAIVNSLVTNIINPLLGIFVGSIDFSNLVFTVGSAHFRYGAFINSVINFLIIAFVVFLLIKLINKLIAKPAEEPEEAVPSQEEKYLQEIVELLKQDKIEH.

3 consecutive transmembrane segments (helical) span residues 19–39 (VGVIVGAAFTAIVNSLVTNII), 42–62 (LLGIFVGSIDFSNLVFTVGSA), and 67–87 (GAFINSVINFLIIAFVVFLLI).

This sequence belongs to the MscL family. Homopentamer.

The protein resides in the cell membrane. In terms of biological role, channel that opens in response to stretch forces in the membrane lipid bilayer. May participate in the regulation of osmotic pressure changes within the cell. In Levilactobacillus brevis (strain ATCC 367 / BCRC 12310 / CIP 105137 / JCM 1170 / LMG 11437 / NCIMB 947 / NCTC 947) (Lactobacillus brevis), this protein is Large-conductance mechanosensitive channel.